Reading from the N-terminus, the 391-residue chain is Histidinol-phosphate aminotransferase (391 aa).

K248 carries the post-translational modification N6-(pyridoxal phosphate)lysine.

Belongs to the class-II pyridoxal-phosphate-dependent aminotransferase family. Histidinol-phosphate aminotransferase subfamily. Homodimer. Requires pyridoxal 5'-phosphate as cofactor.

It catalyses the reaction L-histidinol phosphate + 2-oxoglutarate = 3-(imidazol-4-yl)-2-oxopropyl phosphate + L-glutamate. It functions in the pathway amino-acid biosynthesis; L-histidine biosynthesis; L-histidine from 5-phospho-alpha-D-ribose 1-diphosphate: step 7/9. This chain is Histidinol-phosphate aminotransferase, found in Shewanella oneidensis (strain ATCC 700550 / JCM 31522 / CIP 106686 / LMG 19005 / NCIMB 14063 / MR-1).